Reading from the N-terminus, the 180-residue chain is MSEPELKLVARRIRSFPDFPIPGVLFRDISPLLKDPDSFRASIRLLASHLKSTHSGKIDYIAGLDSRGFLFGPSLAQELGVGCVLIRKQGKLPGPTVSASYSLEYGKAELEIQKDALEPGQRVVIVDDLLATGGTMFAACDLLHQLRAEVVECVSLVELTSLKGRERLGPIPFFSLLQYD.

Position 2 is an N-acetylserine (S2). Phosphoserine occurs at positions 15 and 30. A Phosphotyrosine modification is found at Y60. At S66 the chain carries Phosphoserine. K114 bears the N6-acetyllysine mark. T135 is modified (phosphothreonine).

The protein belongs to the purine/pyrimidine phosphoribosyltransferase family. In terms of assembly, homodimer.

It localises to the cytoplasm. It catalyses the reaction AMP + diphosphate = 5-phospho-alpha-D-ribose 1-diphosphate + adenine. It participates in purine metabolism; AMP biosynthesis via salvage pathway; AMP from adenine: step 1/1. In terms of biological role, catalyzes a salvage reaction resulting in the formation of AMP, that is energically less costly than de novo synthesis. The chain is Adenine phosphoribosyltransferase from Mus musculus (Mouse).